The chain runs to 502 residues: UPF0371 protein CLD_0424 (502 aa).

The protein belongs to the UPF0371 family.

This chain is UPF0371 protein CLD_0424, found in Clostridium botulinum (strain Okra / Type B1).